We begin with the raw amino-acid sequence, 310 residues long: Putative S-adenosyl-L-methionine-dependent methyltransferase Mb0151 (310 aa).

Residues Asp132 and 161-162 (DL) each bind S-adenosyl-L-methionine.

The protein belongs to the UPF0677 family.

In terms of biological role, exhibits S-adenosyl-L-methionine-dependent methyltransferase activity. The polypeptide is Putative S-adenosyl-L-methionine-dependent methyltransferase Mb0151 (Mycobacterium bovis (strain ATCC BAA-935 / AF2122/97)).